A 134-amino-acid chain; its full sequence is MERKMLKSKIHRATVTGADLHYEGSITIDLDLMEASDIIPYEAVCIWDVTNGSRFETYAIEGERGSGVICINGAAARLVAPQDLVIIASFVNMENAEAIAHEPKLVFVDDKNRMLESRKEVAGQATLKSVHWKN.

S25 serves as the catalytic Schiff-base intermediate with substrate; via pyruvic acid. The residue at position 25 (S25) is a Pyruvic acid (Ser). T57 contributes to the substrate binding site. Y58 serves as the catalytic Proton donor. A substrate-binding site is contributed by 73 to 75; it reads GAA.

It belongs to the PanD family. As to quaternary structure, heterooctamer of four alpha and four beta subunits. It depends on pyruvate as a cofactor. In terms of processing, is synthesized initially as an inactive proenzyme, which is activated by self-cleavage at a specific serine bond to produce a beta-subunit with a hydroxyl group at its C-terminus and an alpha-subunit with a pyruvoyl group at its N-terminus.

Its subcellular location is the cytoplasm. It catalyses the reaction L-aspartate + H(+) = beta-alanine + CO2. Its pathway is cofactor biosynthesis; (R)-pantothenate biosynthesis; beta-alanine from L-aspartate: step 1/1. Its function is as follows. Catalyzes the pyruvoyl-dependent decarboxylation of aspartate to produce beta-alanine. The polypeptide is Aspartate 1-decarboxylase (Geobacter sp. (strain M21)).